A 99-amino-acid chain; its full sequence is VLHAPRVQVYSRHPAENGKQNFINCYVSGFHPPQIEVELLKNGKKIDNVEMSDLSFSKDWTFYLLVHAAFTPNDSDEYSCRVSHITLSEPKIVKWDPNK.

In terms of domain architecture, Ig-like C1-type spans 5 to 93 (PRVQVYSRHP…HITLSEPKIV (89 aa)). The cysteines at positions 25 and 80 are disulfide-linked.

It belongs to the beta-2-microglobulin family. In terms of assembly, heterodimer of an alpha chain and a beta chain. Beta-2-microglobulin is the beta-chain of major histocompatibility complex class I molecules.

The protein localises to the secreted. Component of the class I major histocompatibility complex (MHC). Involved in the presentation of peptide antigens to the immune system. This is Beta-2-microglobulin (B2M) from Cavia porcellus (Guinea pig).